A 291-amino-acid polypeptide reads, in one-letter code: Elongation factor Ts (291 aa).

The involved in Mg(2+) ion dislocation from EF-Tu stretch occupies residues 79-82; that stretch reads TDFV.

This sequence belongs to the EF-Ts family.

The protein resides in the cytoplasm. Associates with the EF-Tu.GDP complex and induces the exchange of GDP to GTP. It remains bound to the aminoacyl-tRNA.EF-Tu.GTP complex up to the GTP hydrolysis stage on the ribosome. The sequence is that of Elongation factor Ts from Stenotrophomonas maltophilia (strain K279a).